The sequence spans 455 residues: SVGFKAGVKDYKLTYYTPDYETKDTDILAAFRVTPQPGVPPEEAGAAVAAESSTGTWTTVWTDGLTSLDRYKGRCYHIEPVAGEESQFIAYVAYPLDLFEEGSVTNMFTSIVGNVFGFKALRALRLEDLRIPNAYVKTFQGPPHGIQVERDKLNKYGRPLLGCTIKPKLGLSAKNYGRAVYECLRGGLDFTKDDENVNSQPFMRWRDRFLFCAEALYKAQAETGEIKGHYLNATAGTCEEMIKRAVFARELGVPIVMHDYLTGGFTANTSLAHYCRDNGLLLHIHRAMHAVIDRQKNHGMHFRVLAKALRLSGGDHIHSGTVVGKLEGEREITLGFVDLLRDDFVEKDRSRGIYFTQDWVSLPGVLPVASGGIHVWHMPALTEIFGDDSVLQFGGGTLGHPWGNAPGAVANRVALEACVQARNEGRDLASEGNQIIREASKWSPELAAACEVWKE.

Lys-5 is modified (N6,N6,N6-trimethyllysine). Substrate contacts are provided by Asn-114 and Thr-164. The active-site Proton acceptor is the Lys-166. Lys-168 provides a ligand contact to substrate. The Mg(2+) site is built by Lys-192, Asp-194, and Glu-195. Lys-192 bears the N6-carboxylysine mark. His-285 acts as the Proton acceptor in catalysis. Substrate contacts are provided by Arg-286, His-318, and Ser-370.

Belongs to the RuBisCO large chain family. Type I subfamily. In terms of assembly, heterohexadecamer of 8 large chains and 8 small chains; disulfide-linked. The disulfide link is formed within the large subunit homodimers. Mg(2+) serves as cofactor. The disulfide bond which can form in the large chain dimeric partners within the hexadecamer appears to be associated with oxidative stress and protein turnover.

The protein resides in the plastid. The protein localises to the chloroplast. It carries out the reaction 2 (2R)-3-phosphoglycerate + 2 H(+) = D-ribulose 1,5-bisphosphate + CO2 + H2O. The enzyme catalyses D-ribulose 1,5-bisphosphate + O2 = 2-phosphoglycolate + (2R)-3-phosphoglycerate + 2 H(+). Its function is as follows. RuBisCO catalyzes two reactions: the carboxylation of D-ribulose 1,5-bisphosphate, the primary event in carbon dioxide fixation, as well as the oxidative fragmentation of the pentose substrate in the photorespiration process. Both reactions occur simultaneously and in competition at the same active site. This Lupinus digitatus (Lupine) protein is Ribulose bisphosphate carboxylase large chain.